We begin with the raw amino-acid sequence, 522 residues long: Putative glucosylceramidase 3 (522 aa).

Residues 1–21 (MSRWKVVILCLLSFMFEIGHA) form the signal peptide. The Proton donor role is filled by E259. E364 functions as the Nucleophile in the catalytic mechanism.

Belongs to the glycosyl hydrolase 30 family.

It catalyses the reaction a beta-D-glucosylceramide + H2O = an N-acyl-sphingoid base + D-glucose. It carries out the reaction a beta-D-glucosyl-(1&lt;-&gt;1')-N-acylsphing-4-enine + H2O = an N-acylsphing-4-enine + D-glucose. The catalysed reaction is an N-acyl-1-beta-D-glucosyl-15-methylhexadecasphing-4-enine + H2O = an N-acyl-15-methylhexadecasphing-4-enine + D-glucose. It participates in lipid metabolism; sphingolipid metabolism. Its function is as follows. Glucosylceramidase that catalyzes the hydrolysis of glucosylceramides into free ceramides and glucose. C.elegans contain specific sphingoid bases, which are unique or different in structure compared to the sphingoid bases found in other animals. Two examples of these distinctive compounds are: 15-methylhexadecasphinganine and 15-methylhexadecasphing-4-enine. The protein is Putative glucosylceramidase 3 of Caenorhabditis elegans.